The following is a 303-amino-acid chain: Diaminopimelate epimerase (303 aa).

Substrate is bound by residues N15, Q47, and N67. C76 acts as the Proton donor in catalysis. Substrate contacts are provided by residues 77–78 (GN), N163, N197, and 215–216 (ER). C224 acts as the Proton acceptor in catalysis. A substrate-binding site is contributed by 225–226 (GS). Residues 278-303 (FDPATGEWSRDTQGLQGSGNADRGAA) form a disordered region.

Belongs to the diaminopimelate epimerase family. As to quaternary structure, homodimer.

Its subcellular location is the cytoplasm. The enzyme catalyses (2S,6S)-2,6-diaminopimelate = meso-2,6-diaminopimelate. The protein operates within amino-acid biosynthesis; L-lysine biosynthesis via DAP pathway; DL-2,6-diaminopimelate from LL-2,6-diaminopimelate: step 1/1. Catalyzes the stereoinversion of LL-2,6-diaminopimelate (L,L-DAP) to meso-diaminopimelate (meso-DAP), a precursor of L-lysine and an essential component of the bacterial peptidoglycan. In Brucella abortus (strain S19), this protein is Diaminopimelate epimerase.